Reading from the N-terminus, the 147-residue chain is Ubiquitin-conjugating enzyme E2 D2B (147 aa).

Residues 1–147 (MALKRIHKEL…AREWTQKYAM (147 aa)) form the UBC core domain. The active-site Glycyl thioester intermediate is C85.

Belongs to the ubiquitin-conjugating enzyme family. In terms of assembly, interacts with CNOT4 (via RING domain). As to expression, testis-specific. Mainly expressed in the round spermatids (at protein level).

It catalyses the reaction S-ubiquitinyl-[E1 ubiquitin-activating enzyme]-L-cysteine + [E2 ubiquitin-conjugating enzyme]-L-cysteine = [E1 ubiquitin-activating enzyme]-L-cysteine + S-ubiquitinyl-[E2 ubiquitin-conjugating enzyme]-L-cysteine.. It functions in the pathway protein modification; protein ubiquitination. Catalyzes the covalent attachment of ubiquitin to other proteins. Mediates the selective degradation of short-lived and abnormal proteins. Functions in the E6/E6-AP-induced ubiquitination of p53/TP53. Mediates ubiquitination of PEX5 and SQSTM1 and autoubiquitination of STUB1 and TRAF6. Involved in the signal-induced conjugation and subsequent degradation of NFKBIA, FBXW2-mediated GCM1 ubiquitination and degradation, MDM2-dependent degradation of p53/TP53 and the activation of MAVS in the mitochondria by RIGI in response to viral infection Plays a role in early maturation of the testis. This Rattus norvegicus (Rat) protein is Ubiquitin-conjugating enzyme E2 D2B (Ube2d2b).